The chain runs to 414 residues: Serine/threonine transporter SstT (414 aa).

8 helical membrane-spanning segments follow: residues 16 to 36, 46 to 66, 84 to 104, 143 to 163, 180 to 200, 219 to 239, 300 to 320, and 332 to 352; these read GSLV…AWIS, LGTL…LMLV, ILFL…VFSF, ALLN…GFAL, AVTF…FGLV, LVVL…LLVF, MAGA…TLGV, and VVAS…LLLI.

It belongs to the dicarboxylate/amino acid:cation symporter (DAACS) (TC 2.A.23) family.

Its subcellular location is the cell inner membrane. The enzyme catalyses L-serine(in) + Na(+)(in) = L-serine(out) + Na(+)(out). It catalyses the reaction L-threonine(in) + Na(+)(in) = L-threonine(out) + Na(+)(out). Its function is as follows. Involved in the import of serine and threonine into the cell, with the concomitant import of sodium (symport system). The polypeptide is Serine/threonine transporter SstT (Salmonella heidelberg (strain SL476)).